The sequence spans 426 residues: Histidine--tRNA ligase (426 aa).

The protein belongs to the class-II aminoacyl-tRNA synthetase family. Homodimer.

It is found in the cytoplasm. The catalysed reaction is tRNA(His) + L-histidine + ATP = L-histidyl-tRNA(His) + AMP + diphosphate + H(+). This is Histidine--tRNA ligase from Streptococcus agalactiae serotype III (strain NEM316).